We begin with the raw amino-acid sequence, 80 residues long: Conotoxin Pu11.1 (80 aa).

Residues 1–19 (MKLVLAIVLILMLLSLSTG) form the signal peptide. Positions 20–42 (AEMSDNHASRSATALTDRLLGPK) are excised as a propeptide. Disulfide bonds link Cys46–Cys60, Cys53–Cys65, Cys59–Cys72, and Cys64–Cys79.

It belongs to the conotoxin I3 superfamily. In terms of tissue distribution, expressed by the venom duct.

The protein resides in the secreted. This Conus pulicarius (Flea-bitten cone) protein is Conotoxin Pu11.1.